Reading from the N-terminus, the 245-residue chain is Isopentenyl phosphate kinase (245 aa).

K5–S9 contributes to the ATP binding site. Position 45 (G45) interacts with substrate. G46 serves as a coordination point for ATP. Substrate is bound by residues H50 and G143. ATP-binding positions include D164, Y169–K174, G201, and K205.

This sequence belongs to the isopentenyl phosphate kinase family. Homodimer.

It catalyses the reaction isopentenyl phosphate + ATP = isopentenyl diphosphate + ADP. Its function is as follows. Catalyzes the formation of isopentenyl diphosphate (IPP), the building block of all isoprenoids. Has lower activity with isopentenyl thiolophosphate (ISP). Has low activity with dimethylallyl phosphate (DMAP), 1-butyl phosphate (BP) and 3-buten-1-yl phosphate (BEP). Has no significant activity with geranyl phosphate (in vitro). The sequence is that of Isopentenyl phosphate kinase from Thermoplasma acidophilum (strain ATCC 25905 / DSM 1728 / JCM 9062 / NBRC 15155 / AMRC-C165).